We begin with the raw amino-acid sequence, 139 residues long: Protein archease (139 aa).

Aspartate 12, aspartate 138, and isoleucine 139 together coordinate Ca(2+).

The protein belongs to the archease family.

Its function is as follows. Activates the tRNA-splicing ligase complex by facilitating the enzymatic turnover of catalytic subunit RtcB. Acts by promoting the guanylylation of RtcB, a key intermediate step in tRNA ligation. Can also alter the NTP specificity of RtcB such that ATP, dGTP or ITP is used efficiently. This chain is Protein archease, found in Saccharolobus islandicus (strain L.S.2.15 / Lassen #1) (Sulfolobus islandicus).